The primary structure comprises 103 residues: Integration host factor subunit alpha (103 aa).

The protein belongs to the bacterial histone-like protein family. Heterodimer of an alpha and a beta chain.

Functionally, this protein is one of the two subunits of integration host factor, a specific DNA-binding protein that functions in genetic recombination as well as in transcriptional and translational control. This is Integration host factor subunit alpha from Bartonella bacilliformis (strain ATCC 35685 / KC583 / Herrer 020/F12,63).